Consider the following 614-residue polypeptide: V-type proton ATPase catalytic subunit A isoform 1 (614 aa).

247–254 provides a ligand contact to ATP; that stretch reads GAFGCGKT.

Belongs to the ATPase alpha/beta chains family. In terms of assembly, V-ATPase is a heteromultimeric enzyme made up of two complexes: the ATP-hydrolytic V1 complex and the proton translocation V0 complex. The V1 complex consists of three catalytic AB heterodimers that form a heterohexamer, three peripheral stalks each consisting of EG heterodimers, one central rotor including subunits D and F, and the regulatory subunits C and H. The proton translocation complex V0 consists of the proton transport subunit a, a ring of proteolipid subunits c9c'', rotary subunit d, subunits e and f, and the accessory subunits VhaAC45 and ATP6AP2.

The catalysed reaction is ATP + H2O + 4 H(+)(in) = ADP + phosphate + 5 H(+)(out). Its activity is regulated as follows. ATP hydrolysis occurs at the interface between the nucleotide-binding domains of subunits A and B. ATP hydrolysis triggers a conformational change in the subunits D and F, which induces a shift of subunit d. The c-ring is subsequently rotated and results in a continuous proton translocation across the membrane. Its function is as follows. Catalytic subunit of the V1 complex of vacuolar(H+)-ATPase (V-ATPase), a multisubunit enzyme composed of a peripheral complex (V1) that hydrolyzes ATP and a membrane integral complex (V0) that translocates protons. V-ATPase is responsible for acidifying and maintaining the pH of intracellular compartments and in some cell types, is targeted to the plasma membrane, where it is responsible for acidifying the extracellular environment. The chain is V-type proton ATPase catalytic subunit A isoform 1 (Vha68-1) from Drosophila melanogaster (Fruit fly).